We begin with the raw amino-acid sequence, 488 residues long: MPNSTGKIAQVIGPVVDVAFPINGDLPEINNALTVAKKDGSQLVLEVALELGDGVMRTIAMDSTDGLQRNMAVQDTGGPISVPVGKDTLGRVFNVLGDPIDGGEAFGPDHRRDSIHRDAPKFEDLNTSSEILETGIKVIDLLEPYLRGGKVGLFGGAGVGKTVLIQELIHNIAEEHGGISVFTGVGERTREGNDLYFEMKESGVLENTAMVFGQMNEPPGARMRVALTGLTIAEYFRDVEGQDVLLFIDNIFRFTQAGSEVSALLGRIPSAVGYQPTLATEMGQLQERITSTKKGSVTSIQAIYVPADDYTDPAPATTFAHLDATTNLERRLTEQGIYPAVDPLESSSSALTPEIVGDEHYKVATEVQQVLQRYRELQDIISILGMDELSDEEKVVVARARRIQFFLSQNFNVAERFTGQPGSYVPVEETVKGFKAILDGKYDDYPEDAFRSVGRIEEVVEKAKKMGFAPDDQNTDADEKPAAQAAAN.

155–162 is an ATP binding site; it reads GGAGVGKT. The tract at residues 467–488 is disordered; it reads GFAPDDQNTDADEKPAAQAAAN.

It belongs to the ATPase alpha/beta chains family. In terms of assembly, F-type ATPases have 2 components, CF(1) - the catalytic core - and CF(0) - the membrane proton channel. CF(1) has five subunits: alpha(3), beta(3), gamma(1), delta(1), epsilon(1). CF(0) has three main subunits: a(1), b(2) and c(9-12). The alpha and beta chains form an alternating ring which encloses part of the gamma chain. CF(1) is attached to CF(0) by a central stalk formed by the gamma and epsilon chains, while a peripheral stalk is formed by the delta and b chains.

The protein resides in the cell membrane. It carries out the reaction ATP + H2O + 4 H(+)(in) = ADP + phosphate + 5 H(+)(out). Functionally, produces ATP from ADP in the presence of a proton gradient across the membrane. The catalytic sites are hosted primarily by the beta subunits. In Lacticaseibacillus casei (strain BL23) (Lactobacillus casei), this protein is ATP synthase subunit beta.